Reading from the N-terminus, the 1878-residue chain is MDMEIDDVDNLWTYRSVCMPDYKDAAEIIRPEFDMTKRIFNQRKHLLGMDGHCSTGMTMNEFGTRPMVFTVSKGCYPDLPTDKDKFVGDPQGPKELYMHVYGRFDTYYLDLQNEFQDINNVMNTTHDYNIYDLLKTGARTAMVREAFAGANIHGWLGTKLVYKRPPQSSAGGCRFMVKVYIAGQKTASAYQIKNTLNATSNRFRKKVYNSCVQTYTDFLVAKNAGPIGEMRIKKGVNPGVKKGAKYDYVDVHYRDIEFSNYDTFVLSEIDGVGEDLINLATSILNNHRNNFDILTKTFIKSRLKSLAPIIGGLIGSPNDFTKFKKKMVMYIMTKEFKNCMEYYLTELRSKGIQLYHALGIKSEDVKEEYVRTFCVNMLRYQYLLVMSLKEFWVEKVRGKLYSAVMAKEKEMLTQKIGMQLRTMCFDIETNFVPHSDAEQQVTLIHCVLYDEGAHNCPIEQRTFHYKAEERSMESLKTDLTYDKVVELCKKQVRDGYDLKMKEWLTRTVEQTGMFKSKKILSLFFEKMMTESKIKIHPDSHDYDADNSEPKSVEECLAFCKKRIIEVFDICMEPGKNYFIYNFKTEKEMLLAFLKYVRDSNLTVLTHYNGDSFDLPFVINRCEKLKIDGMKEYTPATFSDGSTETKRRRFQLKLTHRHDILTIKYKKSGKVADSTHKKNAINSYLESKREKLFQADDDDDDDDEDEDDGLLDERQQDSAEDMKKKGPNVYRPMAEARNIFTLQSNFVASRDVMKMVPDQAPNVDDKILKDKTLNSSAFSFLGIRKIDHEAVSYANLCKTWKFGDLNIFVAYCAVDTLLTMKIDQTLKTGMNAVATASNVYLPIRELYGNQALVRTLAIMYSYQWYKNICSPDPSVFKNEDRFWNPEYVWKDDDFKDLKPRAGRTISNVSGVYNSFFSVLFDFNSQYPGVMISENVCVSTLLDKEDADKMSKDDYVEMTIPNVYPKVRHACEPGSEKCGMNLEVVKKKKDYGLKCKWTQEFVMCEHIAKFAKKSVMEGIAGECCKNLLAKRKHYKKLMAEAAKGGNHTEVVIYNQLQLVMKVNANSIFGILLLLDSVTGGAITHEARMQNERGSEYLKKVSGPMAMADTDSTAPIAENLPLDWQPGDDKDDVGPLNRLCRRLFPGRKRPKISEFVHKIDTMYESYGSYLNDGVPEKGIPPAWIKPANLEIEKMFIGLVFIKKKNYYALKMLPGGELATHVAGLACMKSDKTKIKGATQLVLLKMLVEGDYEGYIRYATDLFSLMVVTLRAEEASKSAVKMAVENGQLEGLDELEEKTKRDFGYRDLIPKVYYTSREKVNSIENPKTVADKMEQLRCKRYGIDFSIAATVTDVVRGIKPQVGAPLTAINNTILIREPTEEQKTIEREMDMRWMARSFRQQTREDNRLSDKKEKIKKKNAEVKPLDITDMPDRLKVDQQVHTTPFPTRIRLGVKKLNNMIDYSEKAITKERDSDFVKELFHQPELMADEEELQRATEQVVEMIENFKSFSLHFPLFWYDERYCISNILELEDLDEVWHTLPNDESCVDLWNMYKNLEYEPRYIAVKVGKMGERLQMAFFDSVEESWMEYKCTNCYIFKENVWSLDDKNLAGKIYYMDMQEYEKQTRTTPLIITSPDKKKRYLVNRGSYVRNKNNAFSFKIKNETLMNAMSQTGDVGDKYLTFKPIYGKAGVCIIGSKSAGMCKSTFIRDDGREMPATWPYKRLNNQGIKIPRQKLLKIMNDSLEIRNIHNNHNLEFSFDSKTKNLTIRVETAFDEKRIKFYDESKQEKLEIDIGTNGQTQLGSFYTSVRIENKVEKKPKEVLPEKKQSTLSHFVGMSSAPKFTQDDVVKKKRAPKRAAIDRKSGSGGKKSKITAGKTAGTMF.

Disordered stretches follow at residues 691-727 (LFQA…KGPN) and 1839-1878 (TQDD…GTMF). Positions 694 to 709 (ADDDDDDDDEDEDDGL) are enriched in acidic residues. Over residues 710 to 723 (LDERQQDSAEDMKK) the composition is skewed to basic and acidic residues. Positions 1868-1878 (ITAGKTAGTMF) are enriched in low complexity.

This sequence belongs to the DNA polymerase type-B family.

It carries out the reaction DNA(n) + a 2'-deoxyribonucleoside 5'-triphosphate = DNA(n+1) + diphosphate. The sequence is that of DNA polymerase from Magallana gigas (Pacific oyster).